A 1085-amino-acid polypeptide reads, in one-letter code: Activating transcription factor 7-interacting protein 1 (1085 aa).

9 disordered regions span residues 1 to 22 (MDNTDEPQKKVFKARKTMRASD), 47 to 109 (GKHE…VNVT), 127 to 245 (LGSN…NTDS), 329 to 381 (PNKS…VHSK), 469 to 499 (AAKEDMKKKQENTPNPSLSSGKAASSTANAN), 517 to 560 (RNVG…TSSP), 650 to 843 (ASTN…TTIH), 889 to 910 (NSVRGAVMPSPSLRPVNPQTGS), and 932 to 975 (GAPQ…ANTS). The segment covering 54–64 (SDLNSPLSNTD) has biased composition (polar residues). Basic and acidic residues-rich tracts occupy residues 82-91 (SEIKRPESRA) and 133-150 (NFHEENNIKNRLDQRESD). 2 stretches are compositionally biased toward polar residues: residues 151–165 (TPSGENKSNCDNSFS) and 173–182 (NDITIISNSP). Composition is skewed to basic and acidic residues over residues 347-379 (EREVVHKEEEKHTERGEVSRRKRSKSEDMDSVH) and 469-479 (AAKEDMKKKQE). The stretch at 446 to 480 (NKRHKTVLTELQAKITRLTKRFGAAKEDMKKKQEN) forms a coiled coil. Low complexity-rich tracts occupy residues 487–499 (SSGKAASSTANAN), 529–547 (APVSAAPASSLAAPQTPAS), and 651–666 (STNTTKPNNSPSVSSP). The segment covering 667–717 (GVQRNSPASAGSVRTTLAVQAVSTTHPVAQTTRTSLPTVGTSGLHNSTSSR) has biased composition (polar residues). Residues 732-743 (TAPTEPPTITAP) are compositionally biased toward low complexity. Composition is skewed to polar residues over residues 746–775 (ENQTSRPPTDSSANKRTAEGPTQSVKVTGS), 792–810 (SSQAEAKKQNQTASTAQSI), and 830–843 (TGVPTSGPSQTTIH). The span at 950–968 (PRPVHPAPLPEAPQPPRLP) shows a compositional bias: pro residues. Residues 976–1082 (LPQKPQLKLA…DPQSTDVISS (107 aa)) form the Fibronectin type-III domain.

It belongs to the MCAF family.

The protein resides in the nucleus. Its function is as follows. Recruiter that couples transcriptional factors to general transcription apparatus and thereby modulates transcription regulation and chromatin formation. Can both act as an activator or a repressor depending on the context. Mediates MBD1-dependent transcriptional repression, probably by recruiting complexes containing histone methyltransferase activity. May belong to a complex that represses transcription and couples DNA methylation and histone H3 'Lys-9' trimethylation (H3K9me3). This Gallus gallus (Chicken) protein is Activating transcription factor 7-interacting protein 1 (ATF7IP).